Here is a 248-residue protein sequence, read N- to C-terminus: 5'-nucleotidase SurE (248 aa).

Positions 8, 9, 39, and 91 each coordinate a divalent metal cation.

Belongs to the SurE nucleotidase family. The cofactor is a divalent metal cation.

The protein resides in the cytoplasm. It carries out the reaction a ribonucleoside 5'-phosphate + H2O = a ribonucleoside + phosphate. Functionally, nucleotidase that shows phosphatase activity on nucleoside 5'-monophosphates. In Geobacter sp. (strain M21), this protein is 5'-nucleotidase SurE.